Reading from the N-terminus, the 257-residue chain is Pyridoxine 5'-phosphate synthase (257 aa).

Asn-6 is a 3-amino-2-oxopropyl phosphate binding site. 8–9 is a binding site for 1-deoxy-D-xylulose 5-phosphate; the sequence is DH. A 3-amino-2-oxopropyl phosphate-binding site is contributed by Arg-17. His-41 functions as the Proton acceptor in the catalytic mechanism. Residues Arg-43 and His-48 each contribute to the 1-deoxy-D-xylulose 5-phosphate site. Catalysis depends on Glu-68, which acts as the Proton acceptor. Thr-98 contributes to the 1-deoxy-D-xylulose 5-phosphate binding site. The Proton donor role is filled by His-210. Residues Gly-211 and 232–233 contribute to the 3-amino-2-oxopropyl phosphate site; that span reads GQ.

Belongs to the PNP synthase family. Homooctamer; tetramer of dimers.

It localises to the cytoplasm. It catalyses the reaction 3-amino-2-oxopropyl phosphate + 1-deoxy-D-xylulose 5-phosphate = pyridoxine 5'-phosphate + phosphate + 2 H2O + H(+). It functions in the pathway cofactor biosynthesis; pyridoxine 5'-phosphate biosynthesis; pyridoxine 5'-phosphate from D-erythrose 4-phosphate: step 5/5. Functionally, catalyzes the complicated ring closure reaction between the two acyclic compounds 1-deoxy-D-xylulose-5-phosphate (DXP) and 3-amino-2-oxopropyl phosphate (1-amino-acetone-3-phosphate or AAP) to form pyridoxine 5'-phosphate (PNP) and inorganic phosphate. This chain is Pyridoxine 5'-phosphate synthase, found in Campylobacter jejuni subsp. jejuni serotype O:2 (strain ATCC 700819 / NCTC 11168).